The primary structure comprises 350 residues: MPSSPITVGLVFGGRSGEHDVSIRSAATVVRGLRSGENTERYTVQPIYIDRDGRWWGTDLAEATLTSEVAPELTTPRPPSGFQGFPEGCDAIDLWYPVLHGPNGEDGTIQGLFQLTGKPFVGAGVLGSAVSMDKQAMKSAFSSAGLSQVPYVALHASELEDAKSRSALLDRIERELNYPCFVKPANLGSSVGISKVRSRQELEAGLEQAAALDPRLVVEQGVNAREVECAVLGRRTLEASVIGEVRFDADWYDYETKYTAGRSTTLIPAPLPDPVRDRIREQALQACAAVGVHGMSRVDFFYDETNDQLWINEINTLPGFTAQSMFPMLWAASGVTLEQLVHKLIQTAGE.

Residues 138–346 (KSAFSSAGLS…LEQLVHKLIQ (209 aa)) enclose the ATP-grasp domain. An ATP-binding site is contributed by 173-228 (ERELNYPCFVKPANLGSSVGISKVRSRQELEAGLEQAAALDPRLVVEQGVNAREVE). Positions 299, 313, and 315 each coordinate Mg(2+).

It belongs to the D-alanine--D-alanine ligase family. It depends on Mg(2+) as a cofactor. Mn(2+) is required as a cofactor.

It localises to the cytoplasm. The enzyme catalyses 2 D-alanine + ATP = D-alanyl-D-alanine + ADP + phosphate + H(+). It functions in the pathway cell wall biogenesis; peptidoglycan biosynthesis. In terms of biological role, cell wall formation. The sequence is that of D-alanine--D-alanine ligase from Synechococcus sp. (strain CC9605).